The chain runs to 149 residues: Calmodulin (149 aa).

4 EF-hand domains span residues 8 to 43, 44 to 79, 81 to 116, and 117 to 149; these read EQIAEFKEAFSLFDKDGDGNITTKELGTVMRSLGQN, PTEAELQDMINEVDADGNGTIDFPEFLTMMARKMAD, DTEEEIREAFKVFDKDGNGFISAAELRHVMTNLGEK, and LSDEEVDEMIREADVDGDGQVNYDEFVKMMLSK. 14 residues coordinate Ca(2+): aspartate 21, aspartate 23, aspartate 25, asparagine 27, glutamate 32, aspartate 57, aspartate 59, asparagine 61, threonine 63, glutamate 68, aspartate 94, aspartate 96, asparagine 98, and glutamate 105. An N6,N6,N6-trimethyllysine modification is found at lysine 116. 5 residues coordinate Ca(2+): aspartate 130, aspartate 132, aspartate 134, glutamine 136, and glutamate 141.

The protein belongs to the calmodulin family.

Functionally, calmodulin mediates the control of a large number of enzymes, ion channels and other proteins by Ca(2+). Among the enzymes to be stimulated by the calmodulin-Ca(2+) complex are a number of protein kinases and phosphatases. This is Calmodulin from Physarum polycephalum (Slime mold).